Here is a 20-residue protein sequence, read N- to C-terminus: Venom peptide Ocy8 (20 aa).

As to expression, expressed by the venom gland.

It localises to the secreted. This Opisthacanthus cayaporum (South American scorpion) protein is Venom peptide Ocy8.